The following is a 384-amino-acid chain: Dual-specificity RNA methyltransferase RlmN (384 aa).

The active-site Proton acceptor is the E105. The region spanning E111–D350 is the Radical SAM core domain. A disulfide bridge connects residues C118 and C355. Positions 125, 129, and 132 each coordinate [4Fe-4S] cluster. S-adenosyl-L-methionine is bound by residues G179 to E180, S211, S233 to H235, and N312. Catalysis depends on C355, which acts as the S-methylcysteine intermediate.

The protein belongs to the radical SAM superfamily. RlmN family. [4Fe-4S] cluster serves as cofactor.

Its subcellular location is the cytoplasm. The catalysed reaction is adenosine(2503) in 23S rRNA + 2 reduced [2Fe-2S]-[ferredoxin] + 2 S-adenosyl-L-methionine = 2-methyladenosine(2503) in 23S rRNA + 5'-deoxyadenosine + L-methionine + 2 oxidized [2Fe-2S]-[ferredoxin] + S-adenosyl-L-homocysteine. The enzyme catalyses adenosine(37) in tRNA + 2 reduced [2Fe-2S]-[ferredoxin] + 2 S-adenosyl-L-methionine = 2-methyladenosine(37) in tRNA + 5'-deoxyadenosine + L-methionine + 2 oxidized [2Fe-2S]-[ferredoxin] + S-adenosyl-L-homocysteine. Specifically methylates position 2 of adenine 2503 in 23S rRNA and position 2 of adenine 37 in tRNAs. m2A2503 modification seems to play a crucial role in the proofreading step occurring at the peptidyl transferase center and thus would serve to optimize ribosomal fidelity. The protein is Dual-specificity RNA methyltransferase RlmN of Escherichia coli O157:H7.